Consider the following 189-residue polypeptide: Large ribosomal subunit protein uL5 (189 aa).

This sequence belongs to the universal ribosomal protein uL5 family. Part of the 50S ribosomal subunit; part of the 5S rRNA/L5/L18/L25 subcomplex. Contacts the 5S rRNA and the P site tRNA. Forms a bridge to the 30S subunit in the 70S ribosome.

This is one of the proteins that bind and probably mediate the attachment of the 5S RNA into the large ribosomal subunit, where it forms part of the central protuberance. In the 70S ribosome it contacts protein S13 of the 30S subunit (bridge B1b), connecting the 2 subunits; this bridge is implicated in subunit movement. Contacts the P site tRNA; the 5S rRNA and some of its associated proteins might help stabilize positioning of ribosome-bound tRNAs. This is Large ribosomal subunit protein uL5 from Salinispora tropica (strain ATCC BAA-916 / DSM 44818 / JCM 13857 / NBRC 105044 / CNB-440).